Consider the following 385-residue polypeptide: 8-amino-7-oxononanoate synthase (385 aa).

Arg-21 contributes to the substrate binding site. 108–109 (GF) is a binding site for pyridoxal 5'-phosphate. A substrate-binding site is contributed by His-133. Positions 179, 207, and 233 each coordinate pyridoxal 5'-phosphate. Lys-236 is modified (N6-(pyridoxal phosphate)lysine). Thr-352 is a substrate binding site.

This sequence belongs to the class-II pyridoxal-phosphate-dependent aminotransferase family. BioF subfamily. In terms of assembly, homodimer. Pyridoxal 5'-phosphate is required as a cofactor.

It carries out the reaction 6-carboxyhexanoyl-[ACP] + L-alanine + H(+) = (8S)-8-amino-7-oxononanoate + holo-[ACP] + CO2. It functions in the pathway cofactor biosynthesis; biotin biosynthesis. Its function is as follows. Catalyzes the decarboxylative condensation of pimeloyl-[acyl-carrier protein] and L-alanine to produce 8-amino-7-oxononanoate (AON), [acyl-carrier protein], and carbon dioxide. This chain is 8-amino-7-oxononanoate synthase, found in Salmonella newport (strain SL254).